A 278-amino-acid chain; its full sequence is 2-heptyl-3-hydroxy-4-quinolone dioxygenase AqdC1 (278 aa).

One can recognise an AB hydrolase-1 domain in the interval 29-158 (PTIVMLPGWC…GWVDSCRALF (130 aa)). H103 serves as a coordination point for substrate. H250 (proton donor/acceptor) is an active-site residue.

The protein belongs to the AB hydrolase superfamily.

The catalysed reaction is 2-heptyl-3-hydroxy-4(1H)-quinolone + O2 = N-octanoylanthranilate + CO + H(+). In terms of biological role, involved in the degradation of the Pseudomonas aeruginosa quorum sensing signal molecules HHQ (2-heptyl-4-quinolone) and PQS (2-heptyl-3-hydroxy-4-quinolone) to anthranilic acid. Catalyzes the cleavage of PQS to form N-octanoylanthranilic acid and carbon monoxide. This Rhodococcus erythropolis (Arthrobacter picolinophilus) protein is 2-heptyl-3-hydroxy-4-quinolone dioxygenase AqdC1.